The chain runs to 577 residues: MLSCNICGETVNSEPDMKAHLIVHMENEIICPFCKLSGINYNEICFHIETVHFEQNAPEKNSEKLAAVQYGHSDRKNTNLQSTAEVTSGIHSACASSFPKESSESLPKDRTVKHEAFYTENITESRKYQKSREKKPGLSEAQGSIYETTYSPPECPFCGKIEGCSQDMEIHVKTKHASLLESPLKDCHQPLYDCPMCGLVCTNYHILQEHVDLHLEESSFQQGMDRVQCSSDRELAHRLQQEEDRKRKSEESRQEREEFQKLQRQYGLDNSGGYKQQQLRHMELEVNRGRMHPSEFHSRKADMLESIAIGIDDGKTKTSGIIEALHRYYQNTATDVRCVWLSTVVDHFHSSFGDKGWGCGYRNFQMLLSSLLQSDVYGDCLKGMAVPCIPKIQSMIEDAWNEGFDPQGASQLNNKLQGTKAWIGACEIYTLLTSLRVKCRIIDFHKSTGPLGTHPRLFEWILNYYSSETEGTPKIVCTSKPPIYLQHQGHSRTVVGIEEKKNRTLCLLVFDPGCPSREMQKLLKQDMEASSLRQLRKSVGNLKHKQYQIVAVEGVLSPEEKVARKQASQVFTAEKIP.

The segment at 2–24 adopts a C2H2-type 1 zinc-finger fold; sequence LSCNICGETVNSEPDMKAHLIVH. The segment at 29-52 adopts a C2H2-type 2; atypical zinc-finger fold; sequence IICPFCKLSGINYNEICFHIETVH. Residues 124–137 show a composition bias toward basic and acidic residues; it reads ESRKYQKSREKKPG. A disordered region spans residues 124–145; sequence ESRKYQKSREKKPGLSEAQGSI. The C2H2-type 3; atypical zinc-finger motif lies at 153-176; sequence PECPFCGKIEGCSQDMEIHVKTKH. A C2H2-type 4 zinc finger spans residues 192–214; that stretch reads YDCPMCGLVCTNYHILQEHVDLH. The tract at residues 225 to 247 is MIU; the sequence is DRVQCSSDRELAHRLQQEEDRKR. The segment at 238–260 is disordered; that stretch reads RLQQEEDRKRKSEESRQEREEFQ. The zUBD/ZHA stretch occupies residues 248–273; that stretch reads KSEESRQEREEFQKLQRQYGLDNSGG. At K261 the chain carries N6-acetyllysine. Residue C359 is the Nucleophile of the active site. Residue H490 is the Proton acceptor of the active site. D511 is an active-site residue.

The protein belongs to the peptidase C78 family. ZUFSP subfamily. Interacts with RPA1 and RPA2.

It is found in the cytoplasm. It localises to the nucleus. The catalysed reaction is Thiol-dependent hydrolysis of ester, thioester, amide, peptide and isopeptide bonds formed by the C-terminal Gly of ubiquitin (a 76-residue protein attached to proteins as an intracellular targeting signal).. In terms of biological role, deubiquitinase with endodeubiquitinase activity that specifically interacts with and cleaves 'Lys-63'-linked long polyubiquitin chains. Shows only weak activity against 'Lys-11' and 'Lys-48'-linked chains. Plays an important role in genome stability pathways, functioning to prevent spontaneous DNA damage and also promote cellular survival in response to exogenous DNA damage. Modulates the ubiquitination status of replication protein A (RPA) complex proteins in response to replication stress. The chain is Zinc finger-containing ubiquitin peptidase 1 from Mus musculus (Mouse).